A 421-amino-acid chain; its full sequence is MHDAVTRPTPPADATAWPRRITRAVKIGSVTVGGGHPVVVQSMTNTDTADIAGSVKQVADLWRAGSEMVRLTVNNAESAAAIPRIVDKLRMMGIEVPLIGDFHYNGHQLLAAEPACAEALAKYRINPGNVGFGKKKDLQFGQLIEFAIKYGKPVRIGANWGSLDQSLAAQLMDENSQRDTPWDAGRVLREALIRSAVDSAERAVELGLPRERIILSAKVSGVQELIAVYRDMASRCDFALHLGLTEAGIGSKGIVASAAALSVLLQEGIGDTIRISLTPEPGQSRTQEVVVAQELLQTTGQRAFTPMVTACPGCGRTTSEFFQELAGVVQNHVRAKMPEWKITNPGAENMTLAVMGCVVNGPGESRHANIGISLPGTGEAPSAPVFIDGEKSVTLRGENIAYEFIELIDQYVERTYVRRAG.

Residues Cys311, Cys314, Cys357, and Glu364 each coordinate [4Fe-4S] cluster.

It belongs to the IspG family. It depends on [4Fe-4S] cluster as a cofactor.

It catalyses the reaction (2E)-4-hydroxy-3-methylbut-2-enyl diphosphate + oxidized [flavodoxin] + H2O + 2 H(+) = 2-C-methyl-D-erythritol 2,4-cyclic diphosphate + reduced [flavodoxin]. The protein operates within isoprenoid biosynthesis; isopentenyl diphosphate biosynthesis via DXP pathway; isopentenyl diphosphate from 1-deoxy-D-xylulose 5-phosphate: step 5/6. Converts 2C-methyl-D-erythritol 2,4-cyclodiphosphate (ME-2,4cPP) into 1-hydroxy-2-methyl-2-(E)-butenyl 4-diphosphate. This Xanthomonas axonopodis pv. citri (strain 306) protein is 4-hydroxy-3-methylbut-2-en-1-yl diphosphate synthase (flavodoxin).